Reading from the N-terminus, the 454-residue chain is Protein odr-4 homolog (454 aa).

A run of 2 helical transmembrane segments spans residues 82 to 102 (MLPGGLLVLGVFIITTLELAN) and 432 to 452 (IGVIAAFTVAVLAAGISFHYF).

The protein belongs to the ODR-4 family. As to expression, ubiquitously expressed.

The protein localises to the membrane. Its function is as follows. May play a role in the trafficking of a subset of G-protein coupled receptors. In Homo sapiens (Human), this protein is Protein odr-4 homolog.